The chain runs to 267 residues: Phosphate import ATP-binding protein PstB (267 aa).

The ABC transporter domain maps to 12-251 (VSLDNVSIRY…EFDKTKNMFN (240 aa)). Position 44–51 (44–51 (GPSGCGKS)) interacts with ATP.

Belongs to the ABC transporter superfamily. Phosphate importer (TC 3.A.1.7) family. In terms of assembly, the complex is composed of two ATP-binding proteins (PstB), two transmembrane proteins (PstC and PstA) and a solute-binding protein (PstS).

The protein localises to the cell inner membrane. It catalyses the reaction phosphate(out) + ATP + H2O = ADP + 2 phosphate(in) + H(+). In terms of biological role, part of the ABC transporter complex PstSACB involved in phosphate import. Responsible for energy coupling to the transport system. In Prochlorococcus marinus (strain NATL2A), this protein is Phosphate import ATP-binding protein PstB.